The following is an 814-amino-acid chain: Ubiquitin carboxyl-terminal hydrolase 45 (814 aa).

Over residues 1-14 (MRVKDPTKALPEKA) the composition is skewed to basic and acidic residues. The segment at 1–28 (MRVKDPTKALPEKAKRSKRPTVPHDEDS) is disordered. The interaction with ERCC1 stretch occupies residues 1–62 (MRVKDPTKAL…AIAENLWSVC (62 aa)). Phosphoserine occurs at positions 28 and 29. The UBP-type zinc finger occupies 36–153 (LTCQHVSHAI…AQIVDFLQKH (118 aa)). Zn(2+)-binding residues include Cys-38, His-40, Cys-62, Cys-65, Cys-85, Cys-88, Cys-93, His-101, His-105, His-114, Cys-127, and Cys-130. In terms of domain architecture, USP spans 190-813 (RGITNLGNTC…QAYLLFYERV (624 aa)). Residue Cys-199 is the Nucleophile of the active site. Disordered stretches follow at residues 418 to 443 (IENIHQPRAAKKHSSSKDKSQLIHDR) and 479 to 533 (ESRL…PDGP). Residues 432–443 (SSKDKSQLIHDR) show a composition bias toward basic and acidic residues. Phosphoserine is present on residues Ser-508 and Ser-526. Positions 515–527 (KQTGLFRSSSGSG) are enriched in polar residues. Residue His-746 is the Proton acceptor of the active site.

This sequence belongs to the peptidase C19 family. As to quaternary structure, interacts with ERCC1. The catalytically active form interacts with SPDL1. Widely expressed. High expression is detected in the cerebellum. In the eye, it is expressed at high levels in the optic nerve, sclera and retina, with relatively low levels in the choroid, lens and retinal pigment epithelium.

Its subcellular location is the photoreceptor inner segment. The protein localises to the cytoplasm. It is found in the nucleus. The catalysed reaction is Thiol-dependent hydrolysis of ester, thioester, amide, peptide and isopeptide bonds formed by the C-terminal Gly of ubiquitin (a 76-residue protein attached to proteins as an intracellular targeting signal).. Catalyzes the deubiquitination of SPDL1. Plays a role in the repair of UV-induced DNA damage via deubiquitination of ERCC1, promoting its recruitment to DNA damage sites. May be involved in the maintenance of photoreceptor function. May play a role in normal retinal development. Plays a role in cell migration. This is Ubiquitin carboxyl-terminal hydrolase 45 (USP45) from Homo sapiens (Human).